The following is a 236-amino-acid chain: Probable transcriptional regulatory protein UUR10_0292 (236 aa).

The protein belongs to the TACO1 family.

It is found in the cytoplasm. This is Probable transcriptional regulatory protein UUR10_0292 from Ureaplasma urealyticum serovar 10 (strain ATCC 33699 / Western).